The chain runs to 225 residues: Protein ERP3 (225 aa).

A signal peptide spans 1 to 23 (MSNLCVLFFQFFFLAQFFAEASP). Over 24–195 (LTFELNKGRK…STEHRIVMFS (172 aa)) the chain is Lumenal. The 140-residue stretch at 33-172 (KECLYTLTPE…LHVLERNIQY (140 aa)) folds into the GOLD domain. Positions 129–138 (ERRKARKAQR) are enriched in basic residues. A disordered region spans residues 129 to 149 (ERRKARKAQRNLRDSKTDPLQ). The chain crosses the membrane as a helical span at residues 196-216 (IYGILLIIGMSCAQIAILEFI). Topologically, residues 217 to 225 (FRESRKHNV) are cytoplasmic.

It belongs to the EMP24/GP25L family.

Its subcellular location is the endoplasmic reticulum membrane. In terms of biological role, involved in vesicular protein trafficking. In Saccharomyces cerevisiae (strain ATCC 204508 / S288c) (Baker's yeast), this protein is Protein ERP3 (ERP3).